The primary structure comprises 147 residues: Hemoglobin subunit beta (147 aa).

The residue at position 2 (V2) is an N-acetylvaline. One can recognise a Globin domain in the interval 3–147; the sequence is HLTGEEKSAV…VANALAHKYH (145 aa). T13 carries the phosphothreonine modification. A Phosphoserine modification is found at S45. K60 carries the post-translational modification N6-acetyllysine. Heme b is bound at residue H64. K83 is modified (N6-acetyllysine). H93 lines the heme b pocket. C94 carries the post-translational modification S-nitrosocysteine. K145 carries the post-translational modification N6-acetyllysine.

This sequence belongs to the globin family. As to quaternary structure, heterotetramer of two alpha chains and two beta chains. In terms of tissue distribution, red blood cells.

Functionally, involved in oxygen transport from the lung to the various peripheral tissues. This is Hemoglobin subunit beta (HBB) from Ateles paniscus (Black spider monkey).